The sequence spans 715 residues: Methionine--tRNA ligase (715 aa).

The 'HIGH' region motif lies at 17 to 27; sequence PYANGPIHLGH. Positions 148, 151, 161, and 164 each coordinate Zn(2+). A 'KMSKS' region motif is present at residues 359-363; that stretch reads KMSKS. Lys362 is a binding site for ATP. The tRNA-binding domain maps to 614–715; it reads DLSKVELRVG…KDAKPGDRLK (102 aa).

Belongs to the class-I aminoacyl-tRNA synthetase family. MetG type 1 subfamily. As to quaternary structure, homodimer. Requires Zn(2+) as cofactor.

Its subcellular location is the cytoplasm. The enzyme catalyses tRNA(Met) + L-methionine + ATP = L-methionyl-tRNA(Met) + AMP + diphosphate. Is required not only for elongation of protein synthesis but also for the initiation of all mRNA translation through initiator tRNA(fMet) aminoacylation. The sequence is that of Methionine--tRNA ligase from Leptospira interrogans serogroup Icterohaemorrhagiae serovar copenhageni (strain Fiocruz L1-130).